We begin with the raw amino-acid sequence, 176 residues long: Shikimate kinase (176 aa).

Residue 14-19 (GAGKSS) participates in ATP binding. Position 18 (serine 18) interacts with Mg(2+). Substrate is bound by residues aspartate 36, arginine 60, and glycine 82. Arginine 120 contributes to the ATP binding site. Position 138 (arginine 138) interacts with substrate.

It belongs to the shikimate kinase family. As to quaternary structure, monomer. Mg(2+) is required as a cofactor.

Its subcellular location is the cytoplasm. It carries out the reaction shikimate + ATP = 3-phosphoshikimate + ADP + H(+). It functions in the pathway metabolic intermediate biosynthesis; chorismate biosynthesis; chorismate from D-erythrose 4-phosphate and phosphoenolpyruvate: step 5/7. In terms of biological role, catalyzes the specific phosphorylation of the 3-hydroxyl group of shikimic acid using ATP as a cosubstrate. The sequence is that of Shikimate kinase from Dehalococcoides mccartyi (strain ATCC BAA-2100 / JCM 16839 / KCTC 5957 / BAV1).